We begin with the raw amino-acid sequence, 557 residues long: Formate--tetrahydrofolate ligase 2 (557 aa).

66-73 (TPAGEGKT) provides a ligand contact to ATP.

It belongs to the formate--tetrahydrofolate ligase family.

The catalysed reaction is (6S)-5,6,7,8-tetrahydrofolate + formate + ATP = (6R)-10-formyltetrahydrofolate + ADP + phosphate. It functions in the pathway one-carbon metabolism; tetrahydrofolate interconversion. This is Formate--tetrahydrofolate ligase 2 from Streptococcus pyogenes serotype M12 (strain MGAS9429).